The primary structure comprises 553 residues: Cytochrome P450 86A2 (553 aa).

Residues 2–20 (DVSNTMLLVAVVAAYWLWF) form a helical membrane-spanning segment. Cys459 serves as a coordination point for heme.

This sequence belongs to the cytochrome P450 family. The cofactor is heme. As to expression, expressed in leaves, stems, flowers and siliques. Expressed at low levels in roots. Expressed in guard cells of cotyledons and leaves.

The protein resides in the membrane. The enzyme catalyses an organic molecule + reduced [NADPH--hemoprotein reductase] + O2 = an alcohol + oxidized [NADPH--hemoprotein reductase] + H2O + H(+). Its function is as follows. Catalyzes the omega-hydroxylation of various fatty acids (FA). Acts on saturated and unsaturated fatty acids with chain lengths from C12 to C18. Plays a major role in the biosynthesis of extracellular lipids. Involved in the biosynthesis of hydroxylated fatty acids required for cutin biosynthesis, cuticle development and repression of bacterial type III gene expression. The protein is Cytochrome P450 86A2 (CYP86A2) of Arabidopsis thaliana (Mouse-ear cress).